A 263-amino-acid chain; its full sequence is Versicolorin reductase 1 (263 aa).

NADP(+)-binding residues include I22, D68, N95, and R128. Residues S144 and S145 each act as proton donor in the active site. NADP(+)-binding residues include Y159, K163, I192, and T194. Y159 serves as the catalytic Proton acceptor. K163 acts as the Lowers pKa of active site Tyr in catalysis.

The protein belongs to the short-chain dehydrogenases/reductases (SDR) family.

It localises to the cytoplasm. The protein resides in the cytosol. It functions in the pathway mycotoxin biosynthesis. Functionally, versicolorin reductase; part of the fragmented gene cluster that mediates the biosynthesis of dothistromin (DOTH), a polyketide toxin very similar in structure to the aflatoxin precursor, versicolorin B. The first step of the pathway is the conversion of acetate to norsolorinic acid (NOR) and requires the fatty acid synthase subunits hexA and hexB, as well as the polyketide synthase pksA. PksA combines a hexanoyl starter unit and 7 malonyl-CoA extender units to synthesize the precursor NOR. The hexanoyl starter unit is provided to the acyl-carrier protein (ACP) domain by the fungal fatty acid synthase hexA/hexB. The second step is the conversion of NOR to averantin (AVN) and requires the norsolorinic acid ketoreductase nor1, which catalyzes the dehydration of norsolorinic acid to form (1'S)-averantin. The cytochrome P450 monooxygenase avnA then catalyzes the hydroxylation of AVN to 5'hydroxyaverantin (HAVN). The next step is performed by adhA that transforms HAVN to averufin (AVF). Averufin might then be converted to hydroxyversicolorone by cypX and avfA. Hydroxyversicolorone is further converted versiconal hemiacetal acetate (VHA) by moxY. VHA is then the substrate for the versiconal hemiacetal acetate esterase est1 to yield versiconal (VAL). Versicolorin B synthase vbsA then converts VAL to versicolorin B (VERB) by closing the bisfuran ring. Then, the activity of the versicolorin B desaturase verB leads to versicolorin A (VERA). DotB, a predicted chloroperoxidase, may perform epoxidation of the A-ring of VERA. Alternatively, a cytochrome P450, such as cypX or avnA could catalyze this step. It is also possible that another, uncharacterized, cytochrome P450 enzyme is responsible for this step. Opening of the epoxide could potentially be achieved by the epoxide hydrolase epoA. However, epoA seems not to be required for DOTH biosynthesis, but other epoxide hydrolases may have the ability to complement this hydrolysis. Alternatively, opening of the epoxide ring could be achieved non-enzymatically. The next step is the deoxygenation of ring A to yield the 5,8-dihydroxyanthraquinone which is most likely catalyzed by the NADPH dehydrogenase encoded by ver1. The last stages of DOTH biosynthesis are proposed to involve hydroxylation of the bisfuran. OrdB and norB might have oxidative roles here. An alternative possibility is that cytochrome P450 monoogenases such as avnA and cypX might perform these steps in addition to previously proposed steps. This is Versicolorin reductase 1 from Dothistroma septosporum (Red band needle blight fungus).